A 525-amino-acid chain; its full sequence is GMP synthase [glutamine-hydrolyzing] (525 aa).

The Glutamine amidotransferase type-1 domain occupies 9–207 (RILILDFGSQ…VLDICGCAAL (199 aa)). Cys-86 functions as the Nucleophile in the catalytic mechanism. Catalysis depends on residues His-181 and Glu-183. Residues 208 to 400 (WTPSNIVDDA…LGLPYDMVYR (193 aa)) enclose the GMPS ATP-PPase domain. An ATP-binding site is contributed by 235 to 241 (SGGVDSS).

Homodimer.

The enzyme catalyses XMP + L-glutamine + ATP + H2O = GMP + L-glutamate + AMP + diphosphate + 2 H(+). Its pathway is purine metabolism; GMP biosynthesis; GMP from XMP (L-Gln route): step 1/1. Its function is as follows. Catalyzes the synthesis of GMP from XMP. This chain is GMP synthase [glutamine-hydrolyzing], found in Pseudomonas aeruginosa (strain UCBPP-PA14).